Here is a 635-residue protein sequence, read N- to C-terminus: Extracellular metalloproteinase 1 (635 aa).

Positions 1-19 (MHGLLLAAGLLSLPLHVLA) are cleaved as a signal peptide. The propeptide occupies 20–246 (HPQPSTSTSL…VHNVVDYVAH (227 aa)). N-linked (GlcNAc...) asparagine glycosylation occurs at N287. H430 lines the Zn(2+) pocket. E431 is a catalytic residue. H434 is a Zn(2+) binding site. N475, N594, and N623 each carry an N-linked (GlcNAc...) asparagine glycan.

This sequence belongs to the peptidase M36 family. The cofactor is Zn(2+).

It localises to the secreted. Functionally, secreted metalloproteinase probably acting as a virulence factor. The chain is Extracellular metalloproteinase 1 (MEP1) from Trichophyton rubrum (Athlete's foot fungus).